Here is a 961-residue protein sequence, read N- to C-terminus: Aconitate hydratase A (961 aa).

Positions 499, 565, and 568 each coordinate [4Fe-4S] cluster.

This sequence belongs to the aconitase/IPM isomerase family. Monomer. Requires [4Fe-4S] cluster as cofactor.

It catalyses the reaction citrate = D-threo-isocitrate. The catalysed reaction is (2S,3R)-3-hydroxybutane-1,2,3-tricarboxylate = 2-methyl-cis-aconitate + H2O. It functions in the pathway carbohydrate metabolism; tricarboxylic acid cycle; isocitrate from oxaloacetate: step 2/2. The protein operates within organic acid metabolism; propanoate degradation. In terms of biological role, involved in the catabolism of short chain fatty acids (SCFA) via the tricarboxylic acid (TCA)(acetyl degradation route) and probably via the 2-methylcitrate cycle I (propionate degradation route). Catalyzes the reversible isomerization of citrate to isocitrate via cis-aconitate. The apo form of AcnA functions as a RNA-binding regulatory protein. Could catalyze the hydration of 2-methyl-cis-aconitate to yield (2R,3S)-2-methylisocitrate. In Mycobacterium avium, this protein is Aconitate hydratase A (acn).